A 247-amino-acid polypeptide reads, in one-letter code: 5'-nucleotidase SurE (247 aa).

The a divalent metal cation site is built by Asp-8, Asp-9, Ser-39, and Asn-91.

It belongs to the SurE nucleotidase family. A divalent metal cation serves as cofactor.

Its subcellular location is the cytoplasm. It carries out the reaction a ribonucleoside 5'-phosphate + H2O = a ribonucleoside + phosphate. Functionally, nucleotidase that shows phosphatase activity on nucleoside 5'-monophosphates. The chain is 5'-nucleotidase SurE from Chromobacterium violaceum (strain ATCC 12472 / DSM 30191 / JCM 1249 / CCUG 213 / NBRC 12614 / NCIMB 9131 / NCTC 9757 / MK).